We begin with the raw amino-acid sequence, 196 residues long: ATP-dependent Clp protease proteolytic subunit (196 aa).

The Nucleophile role is filled by Ser-101. His-126 is an active-site residue.

This sequence belongs to the peptidase S14 family. Component of the chloroplastic Clp protease core complex.

Its subcellular location is the plastid. It is found in the chloroplast stroma. It catalyses the reaction Hydrolysis of proteins to small peptides in the presence of ATP and magnesium. alpha-casein is the usual test substrate. In the absence of ATP, only oligopeptides shorter than five residues are hydrolyzed (such as succinyl-Leu-Tyr-|-NHMec, and Leu-Tyr-Leu-|-Tyr-Trp, in which cleavage of the -Tyr-|-Leu- and -Tyr-|-Trp bonds also occurs).. In terms of biological role, cleaves peptides in various proteins in a process that requires ATP hydrolysis. Has a chymotrypsin-like activity. Plays a major role in the degradation of misfolded proteins. This is ATP-dependent Clp protease proteolytic subunit from Lobularia maritima (Sweet alyssum).